We begin with the raw amino-acid sequence, 128 residues long: Cyclin-dependent protein kinase inhibitor SMR1 (128 aa).

The interval 17–74 (PIKIRSKTSKTKKDEGDDDEDDLRCSTPTSQEHKIPAVVDSPPPPPRKPRPPPSAPSA) is disordered. Over residues 57 to 71 (SPPPPPRKPRPPPSA) the composition is skewed to pro residues.

As to quaternary structure, interacts with CDKB1-1. Interacts with CPR5. As to expression, expressed in roots, leaves, stems, siliques and flowers. Expressed in the root elongation zone.

It localises to the nucleus. Probable cyclin-dependent protein kinase (CDK) inhibitor that functions as a repressor of mitosis in the endoreduplication cell cycle. Cooperates with SIM and SMR2 to promote endoreplication during leaf development. Specifically regulates endoreduplication in epidermal pavement cells to produce the cell size pattern. Is necessary for giant cell formation. Positive regulator of effector-triggered immunity (ETI). The chain is Cyclin-dependent protein kinase inhibitor SMR1 from Arabidopsis thaliana (Mouse-ear cress).